The primary structure comprises 360 residues: Peptide chain release factor 1 (360 aa).

Q235 bears the N5-methylglutamine mark. Residues 285–308 (KRQEAEASERRNLLGSGDRSDRNR) show a composition bias toward basic and acidic residues. Residues 285–313 (KRQEAEASERRNLLGSGDRSDRNRTYNFP) are disordered.

It belongs to the prokaryotic/mitochondrial release factor family. Methylated by PrmC. Methylation increases the termination efficiency of RF1.

The protein localises to the cytoplasm. Its function is as follows. Peptide chain release factor 1 directs the termination of translation in response to the peptide chain termination codons UAG and UAA. This is Peptide chain release factor 1 from Photorhabdus laumondii subsp. laumondii (strain DSM 15139 / CIP 105565 / TT01) (Photorhabdus luminescens subsp. laumondii).